The following is a 383-amino-acid chain: Acetylornithine deacetylase (383 aa).

Residue H80 coordinates Zn(2+). D82 is a catalytic residue. D112 serves as a coordination point for Zn(2+). E144 is an active-site residue. Residues E145, E169, and H355 each coordinate Zn(2+).

Belongs to the peptidase M20A family. ArgE subfamily. Homodimer. The cofactor is Zn(2+). Co(2+) is required as a cofactor. Glutathione serves as cofactor.

The protein localises to the cytoplasm. It carries out the reaction N(2)-acetyl-L-ornithine + H2O = L-ornithine + acetate. It participates in amino-acid biosynthesis; L-arginine biosynthesis; L-ornithine from N(2)-acetyl-L-ornithine (linear): step 1/1. Functionally, catalyzes the hydrolysis of the amide bond of N(2)-acetylated L-amino acids. Cleaves the acetyl group from N-acetyl-L-ornithine to form L-ornithine, an intermediate in L-arginine biosynthesis pathway, and a branchpoint in the synthesis of polyamines. This chain is Acetylornithine deacetylase, found in Shigella dysenteriae serotype 1 (strain Sd197).